Here is a 69-residue protein sequence, read N- to C-terminus: Large ribosomal subunit protein uL29 (69 aa).

Belongs to the universal ribosomal protein uL29 family.

This Natronomonas pharaonis (strain ATCC 35678 / DSM 2160 / CIP 103997 / JCM 8858 / NBRC 14720 / NCIMB 2260 / Gabara) (Halobacterium pharaonis) protein is Large ribosomal subunit protein uL29.